A 505-amino-acid polypeptide reads, in one-letter code: Cytochrome P450 71A2 (505 aa).

A helical transmembrane segment spans residues 7–27; it reads WYSLLIPLFVFIFLLIHHCFF. C448 contacts heme.

It belongs to the cytochrome P450 family. Heme serves as cofactor.

It is found in the membrane. May have a role in maturation, such as during flavor formation or other metabolite production specific to aging tissues. The sequence is that of Cytochrome P450 71A2 (CYP71A2) from Solanum melongena (Eggplant).